The primary structure comprises 152 residues: Anti-CBASS protein Acb1 (152 aa).

Y12 is a binding site for 3',3'-cGAMP. Y12 is a binding site for 3',3'-cUAMP. Active-site residues include H44, T46, H113, and T115. 3',3'-cGAMP contacts are provided by E141 and W147. E141 and W147 together coordinate 3',3'-cUAMP.

This sequence belongs to the anti-CBASS protein Acb1 family.

The enzyme catalyses 3',3'-cUAMP + H2O = U[3'-5']pAp[3'] + H(+). The catalysed reaction is 3',3',3'-c-tri-AMP + H2O = A[3'-5']pA[3'-5']pAp[3'] + H(+). It carries out the reaction 3',3',3'-cAAG + H2O = G[3'-5']pA[3'-5']pAp[3'] + H(+). It catalyses the reaction 3',3',3'-cAAG + H2O = A[3'-5']pG[3'-5']pAp[3'] + H(+). The enzyme catalyses 3',3'-cGAMP + H2O = G[3'-5']pAp[3'] + H(+). In terms of biological role, counteracts the host CBASS antiviral system. Phosphodiesterase that enables metal-independent hydrolysis of the host cyclic di- and trinucleotide CBASS signals such as 3'3'-cGAMP, 3'3'cUA, and 3'3'3'-cAAA. Does not cleave cGG or cA4. Besides evasion of the CBASS system, might also enable evasion of the type III CRISPR systems that use cA3 signals. The chain is Anti-CBASS protein Acb1 (57B) from Escherichia coli (Bacteriophage T4).